We begin with the raw amino-acid sequence, 1223 residues long: A disintegrin and metalloproteinase with thrombospondin motifs 14 (1223 aa).

The N-terminal stretch at 1–22 is a signal peptide; sequence MAPLRALLSYLLPLHCALCAAA. Residues 23–252 constitute a propeptide that is removed on maturation; it reads GSRTPELHLS…QLGDTERKRR (230 aa). N-linked (GlcNAc...) asparagine glycosylation occurs at asparagine 109. Residues 259-460 form the Peptidase M12B domain; sequence YSIEVLLVVD…PSYDCLLDDP (202 aa). Intrachain disulfides connect cysteine 336–cysteine 382, cysteine 376–cysteine 455, and cysteine 415–cysteine 441. Zn(2+) is bound at residue histidine 398. The active site involves glutamate 399. Positions 402 and 408 each coordinate Zn(2+). Positions 461–551 constitute a Disintegrin domain; the sequence is FDPAWPQPPE…WKSPEQTYGQ (91 aa). A glycan (N-linked (GlcNAc...) asparagine) is linked at asparagine 475. 7 disulfides stabilise this stretch: cysteine 482–cysteine 507, cysteine 493–cysteine 516, cysteine 502–cysteine 535, cysteine 529–cysteine 540, cysteine 564–cysteine 601, cysteine 568–cysteine 606, and cysteine 579–cysteine 591. The TSP type-1 1 domain maps to 552–607; that stretch reads DGGWSSWTKFGSCSRSCGGGVRSRSRSCNNPSPAYGGRLCLGPMFEYQVCNSEECP. The spacer stretch occupies residues 730–846; that stretch reads LKLVQIPAGA…GSNNVLLEEM (117 aa). TSP type-1 domains follow at residues 847-907, 908-967, and 968-1022; these read DTYE…HPCS, QPVW…LRVP, and CPAQ…PACG. Asparagine 941 carries N-linked (GlcNAc...) asparagine glycosylation. Cystine bridges form between cysteine 980–cysteine 1016, cysteine 984–cysteine 1021, and cysteine 995–cysteine 1005. A glycan (N-linked (GlcNAc...) asparagine) is linked at asparagine 1027. In terms of domain architecture, PLAC spans 1059-1097; the sequence is STEPCTGDRSVFCQMEVLDRYCSIPGYHRLCCVSCIKKA. The tract at residues 1100 to 1223 is disordered; the sequence is PNPGPDPGPT…TSLPAASPVT (124 aa). Positions 1101–1125 are enriched in pro residues; it reads NPGPDPGPTSLPPFSTPGSPLPGPQ. Basic and acidic residues predominate over residues 1199-1211; the sequence is PEDKGQPGEDLRH.

Post-translationally, the precursor is cleaved by a furin endopeptidase. In terms of processing, glycosylated. Can be O-fucosylated by POFUT2 on a serine or a threonine residue found within the consensus sequence C1-X(2)-(S/T)-C2-G of the TSP type-1 repeat domains where C1 and C2 are the first and second cysteine residue of the repeat, respectively. Fucosylated repeats can then be further glycosylated by the addition of a beta-1,3-glucose residue by the glucosyltransferase, B3GALTL. Fucosylation mediates the efficient secretion of ADAMTS family members. Can also be C-glycosylated with one or two mannose molecules on tryptophan residues within the consensus sequence W-X-X-W of the TPRs, and N-glycosylated. These other glycosylations can also facilitate secretion. Expressed in retina and at low levels in brain, lung and placenta. High expression in fetal tissues.

It localises to the secreted. The protein localises to the extracellular space. It is found in the extracellular matrix. Its function is as follows. Has aminoprocollagen type I processing activity in the absence of ADAMTS2. Seems to be synthesized as a latent enzyme that requires activation to display aminoprocollagen peptidase activity. Cleaves lysyl oxidase LOX at a site downstream of its propeptide cleavage site to produce a short LOX form. The chain is A disintegrin and metalloproteinase with thrombospondin motifs 14 (ADAMTS14) from Homo sapiens (Human).